The chain runs to 874 residues: DNA mismatch repair protein MutS (874 aa).

Residue 630-637 participates in ATP binding; sequence GPNMAGKS.

This sequence belongs to the DNA mismatch repair MutS family.

Functionally, this protein is involved in the repair of mismatches in DNA. It is possible that it carries out the mismatch recognition step. This protein has a weak ATPase activity. This chain is DNA mismatch repair protein MutS, found in Chlorobium phaeovibrioides (strain DSM 265 / 1930) (Prosthecochloris vibrioformis (strain DSM 265)).